The primary structure comprises 254 residues: Ribosomal RNA large subunit methyltransferase E (254 aa).

Residues Met-1–Gly-18 are compositionally biased toward gly residues. Residues Met-1 to Val-26 are disordered. Gly-89, Trp-91, Asp-119, Asp-135, and Asp-159 together coordinate S-adenosyl-L-methionine. The active-site Proton acceptor is Lys-199.

The protein belongs to the class I-like SAM-binding methyltransferase superfamily. RNA methyltransferase RlmE family.

The protein localises to the cytoplasm. It catalyses the reaction uridine(2552) in 23S rRNA + S-adenosyl-L-methionine = 2'-O-methyluridine(2552) in 23S rRNA + S-adenosyl-L-homocysteine + H(+). Its function is as follows. Specifically methylates the uridine in position 2552 of 23S rRNA at the 2'-O position of the ribose in the fully assembled 50S ribosomal subunit. This Parvibaculum lavamentivorans (strain DS-1 / DSM 13023 / NCIMB 13966) protein is Ribosomal RNA large subunit methyltransferase E.